The primary structure comprises 729 residues: Translation initiation factor IF-2 (729 aa).

The interval 20–141 (QFAGGGRGPG…TTTVRAPVRP (122 aa)) is disordered. A compositionally biased stretch (gly residues) spans 22–91 (AGGGRGPGNP…PGGGRGGGRG (70 aa)). The span at 92–108 (GDGRRRDESFVENEGGR) shows a compositional bias: basic and acidic residues. The span at 112–127 (SGRTTSTATTARTPGG) shows a compositional bias: low complexity. The 168-residue stretch at 229–396 (PRPPVVTIMG…IILLVADLNE (168 aa)) folds into the tr-type G domain. The G1 stretch occupies residues 238 to 245 (GHVDHGKT). 238 to 245 (GHVDHGKT) provides a ligand contact to GTP. A G2 region spans residues 263–267 (GITQH). Residues 284 to 287 (DTPG) form a G3 region. GTP contacts are provided by residues 284–288 (DTPGH) and 338–341 (NKID). A G4 region spans residues 338-341 (NKID). The G5 stretch occupies residues 374–376 (SAK).

The protein belongs to the TRAFAC class translation factor GTPase superfamily. Classic translation factor GTPase family. IF-2 subfamily.

Its subcellular location is the cytoplasm. One of the essential components for the initiation of protein synthesis. Protects formylmethionyl-tRNA from spontaneous hydrolysis and promotes its binding to the 30S ribosomal subunits. Also involved in the hydrolysis of GTP during the formation of the 70S ribosomal complex. This is Translation initiation factor IF-2 from Roseiflexus sp. (strain RS-1).